A 145-amino-acid polypeptide reads, in one-letter code: Large ribosomal subunit protein uL11 (145 aa).

It belongs to the universal ribosomal protein uL11 family. Part of the ribosomal stalk of the 50S ribosomal subunit. Interacts with L10 and the large rRNA to form the base of the stalk. L10 forms an elongated spine to which L12 dimers bind in a sequential fashion forming a multimeric L10(L12)X complex. One or more lysine residues are methylated.

Functionally, forms part of the ribosomal stalk which helps the ribosome interact with GTP-bound translation factors. In Rickettsia typhi (strain ATCC VR-144 / Wilmington), this protein is Large ribosomal subunit protein uL11.